The sequence spans 46 residues: uncharacterized protein (46 aa).

This is an uncharacterized protein from Escherichia coli.